Here is a 154-residue protein sequence, read N- to C-terminus: Nuclear cap-binding protein subunit 2-A (154 aa).

MRNA contacts are provided by residues Tyr10, Tyr33, 102-106 (RVDWD), 113-117 (RQYGR), and 123-124 (QV). The RRM domain occupies 30 to 108 (STLYVGNLSF…RLIRVDWDAG (79 aa)).

This sequence belongs to the RRM NCBP2 family. As to quaternary structure, component of the nuclear cap-binding complex (CBC), a heterodimer composed of Cbp80 and Cbp20 that interacts with m7GpppG-capped RNA. Interacts with Ars2.

The protein resides in the nucleus. Its function is as follows. Component of the cap-binding complex (CBC), which binds co-transcriptionally to the 5' cap of pre-mRNAs and is involved in various processes such as pre-mRNA splicing and RNA-mediated gene silencing (RNAi). The CBC complex is involved in miRNA-mediated RNA interference via its interaction with Ars2 and is required for primary microRNAs (miRNAs) processing. Also involved in innate immunity via the short interfering RNAs (siRNAs) processing machinery by restricting the viral RNA production. In the CBC complex, Cbp20 recognizes and binds capped RNAs (m7GpppG-capped RNA) but requires Cbp80 to stabilize the movement of its N-terminal loop and lock the CBC into a high affinity cap-binding state with the cap structure. The sequence is that of Nuclear cap-binding protein subunit 2-A (Cbp20-A) from Drosophila virilis (Fruit fly).